Consider the following 548-residue polypeptide: Splicing factor U2af large subunit B (548 aa).

Residues 1–82 are compositionally biased toward basic and acidic residues; the sequence is MADDHAAAAD…DRDRDRDKDR (82 aa). A disordered region spans residues 1–156; it reads MADDHAAAAD…SKRVSGFDMA (156 aa). Over residues 83–93 the composition is skewed to basic residues; that stretch reads DRHHRHHRERR. Residues 94-120 show a composition bias toward basic and acidic residues; the sequence is EHRDRSDDHDRHRSRDSERRRDHERDG. Positions 121 to 149 are enriched in basic residues; sequence RRRHRSRSRSRSRGRDRRSRSRSRSKSKR. RRM domains follow at residues 214–297, 334–412, and 453–539; these read RRVY…RPTD, DRIF…RANQ, and QVVS…YPEN.

Belongs to the splicing factor SR family.

Its subcellular location is the nucleus. Necessary for the splicing of pre-mRNA. This Oryza sativa subsp. japonica (Rice) protein is Splicing factor U2af large subunit B (U2AF65B).